The primary structure comprises 308 residues: Oligopeptide transport ATP-binding protein AmiF (308 aa).

The 246-residue stretch at 6 to 251 folds into the ABC transporter domain; the sequence is VEIKDLEISF…PIHPYTQALL (246 aa). Position 42–49 (42–49) interacts with ATP; the sequence is GESGSGKT.

This sequence belongs to the ABC transporter superfamily.

Its subcellular location is the cell membrane. In terms of biological role, part of the binding-protein-dependent transport system for oligopeptides. Probably responsible for energy coupling to the transport system. This is Oligopeptide transport ATP-binding protein AmiF (amiF) from Streptococcus pneumoniae serotype 4 (strain ATCC BAA-334 / TIGR4).